Consider the following 835-residue polypeptide: MAAPILKDVVAYVEVWSSNGTENYSKTFTTQLVDMGAKVSKTFNKQVTHVIFKDGYQSTWDKAQKRGVKLVSVLWVEKCRTAGAHIDESLFPAANMNEHLSSLIKKKRKCMQPKDFNFKTPENDKRFQKKFEKMAKELQRQKTNLDDDVPILLFESNGSLIYTPTIEINSRHHSAMEKRLQEMKEKRENLSPTSSQMIQQSHDNPSNSLCEAPLNISRDTLCSDEYFAGGLHSSFDDLCGNSGCGNQERKLEGSINDIKSDVCISSLVLKANNIHSSPSFTHLDKSSPQKFLSNLSKEEINLQRNIAGKVVTPDQKQAAGMSQETFEEKYRLSPTLSSTKGHLLIHSRPRSSSVKRKRVSHGSHSPPKEKCKRKRSTRRSIMPRLQLCRSEDRLQHVAGPALEALSCGESSYDDYFSPDNLKERYSENLPPESQLPSSPAQLSCRSLSKKERTSIFEMSDFSCVGKKTRTVDITNFTAKTISSPRKTGNGEGRATSSCVTSAPEEALRCCRQAGKEDACPEGNGFSYTIEDPALPKGHDDDLTPLEGSLEEMKEAVGLKSTQNKGTTSKISNSSEGEAQSEHEPCFIVDCNMETSTEEKENLPGGYSGSVKNRPTRHDVLDDSCDGFKDLIKPHEELKKSGRGKKPTRTLVMTSMPSEKQNVVIQVVDKLKGFSIAPDVCETTTHVLSGKPLRTLNVLLGIARGCWVLSYDWVLWSLELGHWISEEPFELSHHFPAAPLCRSECHLSAGPYRGTLFADQPAMFVSPASSPPVAKLCELVHLCGGRVSQVPRQASIVIGPYSGKKKATVKYLSEKWVLDSITQHKVCAPENYLLSQ.

The BRCT 1 domain occupies 1 to 93 (MAAPILKDVV…AHIDESLFPA (93 aa)). A phosphoserine mark is found at S279, S287, S296, and S333. 2 disordered regions span residues 313 to 381 (PDQK…RRSI) and 419 to 443 (DNLK…AQLS). Residue T335 is modified to Phosphothreonine. Over residues 343-361 (LLIHSRPRSSSVKRKRVSH) the composition is skewed to basic residues. The segment covering 434-443 (QLPSSPAQLS) has biased composition (polar residues). S548 is subject to Phosphoserine. Positions 555–584 (AVGLKSTQNKGTTSKISNSSEGEAQSEHEP) are disordered. Positions 559 to 577 (KSTQNKGTTSKISNSSEGE) are enriched in polar residues. BRCT domains follow at residues 640-730 (SGRG…PFEL) and 751-833 (YRGT…NYLL).

Interacts with CDC27 and maybe other components of the APC/C complex. Interacts with histone variant H2AX under DNA damage conditions. As to expression, expressed in fetal brain, liver and kidney.

The protein localises to the cytoplasm. Its subcellular location is the cytoskeleton. It is found in the microtubule organizing center. It localises to the centrosome. In terms of biological role, implicated in chromosome condensation and DNA damage induced cellular responses. May play a role in neurogenesis and regulation of the size of the cerebral cortex. The sequence is that of Microcephalin from Homo sapiens (Human).